Reading from the N-terminus, the 275-residue chain is MPELPEVETTRRGIDAVITGKTLRRLLVRESRMRWPIPADLPGLLSGRAVLECARRGKYLLLRFEHGTQIVHLGMSGSLRSVPAGEAPRKHDHVDWIFDHATLRLHDPRRFGAVLWHPDTAGPIAAHPLLARLGIEPFDPRFDGAWLHSQFRNRAIAVKQALLAGDAVVGVGNIYASESLFRAGIDPRTPARRISRARCARLADMVRATLADALASGGSTLRDYVGASGQPGSYFEIHAAVYERAGLPCRVCGTPIRRLVQGQRATYYCPSCQKR.

The active-site Schiff-base intermediate with DNA is the Pro2. Glu3 functions as the Proton donor in the catalytic mechanism. The active-site Proton donor; for beta-elimination activity is Lys58. The DNA site is built by His91, Arg109, and Arg154. The FPG-type zinc finger occupies Ala240–Lys274. Arg264 serves as the catalytic Proton donor; for delta-elimination activity.

The protein belongs to the FPG family. As to quaternary structure, monomer. It depends on Zn(2+) as a cofactor.

It carries out the reaction Hydrolysis of DNA containing ring-opened 7-methylguanine residues, releasing 2,6-diamino-4-hydroxy-5-(N-methyl)formamidopyrimidine.. The enzyme catalyses 2'-deoxyribonucleotide-(2'-deoxyribose 5'-phosphate)-2'-deoxyribonucleotide-DNA = a 3'-end 2'-deoxyribonucleotide-(2,3-dehydro-2,3-deoxyribose 5'-phosphate)-DNA + a 5'-end 5'-phospho-2'-deoxyribonucleoside-DNA + H(+). Its function is as follows. Involved in base excision repair of DNA damaged by oxidation or by mutagenic agents. Acts as a DNA glycosylase that recognizes and removes damaged bases. Has a preference for oxidized purines, such as 7,8-dihydro-8-oxoguanine (8-oxoG). Has AP (apurinic/apyrimidinic) lyase activity and introduces nicks in the DNA strand. Cleaves the DNA backbone by beta-delta elimination to generate a single-strand break at the site of the removed base with both 3'- and 5'-phosphates. The polypeptide is Formamidopyrimidine-DNA glycosylase (Bordetella petrii (strain ATCC BAA-461 / DSM 12804 / CCUG 43448)).